The sequence spans 179 residues: UPF0227 protein Shew185_2404 (179 aa).

Belongs to the UPF0227 family.

In Shewanella baltica (strain OS185), this protein is UPF0227 protein Shew185_2404.